Reading from the N-terminus, the 138-residue chain is Prefoldin subunit alpha (138 aa).

This sequence belongs to the prefoldin subunit alpha family. As to quaternary structure, heterohexamer of two alpha and four beta subunits.

Its subcellular location is the cytoplasm. Its function is as follows. Molecular chaperone capable of stabilizing a range of proteins. Seems to fulfill an ATP-independent, HSP70-like function in archaeal de novo protein folding. This is Prefoldin subunit alpha from Methanococcoides burtonii (strain DSM 6242 / NBRC 107633 / OCM 468 / ACE-M).